A 578-amino-acid polypeptide reads, in one-letter code: A-type ATP synthase subunit A (578 aa).

Residue 228–235 coordinates ATP; the sequence is GPFGSGKT.

This sequence belongs to the ATPase alpha/beta chains family. As to quaternary structure, has multiple subunits with at least A(3), B(3), C, D, E, F, H, I and proteolipid K(x).

The protein resides in the cell membrane. It catalyses the reaction ATP + H2O + 4 H(+)(in) = ADP + phosphate + 5 H(+)(out). Produces ATP from ADP in the presence of a proton gradient across the membrane. The archaeal alpha chain is a catalytic subunit. In terms of biological role, component of the A-type ATP synthase that produces ATP from ADP in the presence of a proton gradient across the membrane. The A chain is the catalytic subunit. This chain is A-type ATP synthase subunit A, found in Methanosarcina barkeri.